The following is a 728-amino-acid chain: Ribosome biogenesis protein bop1-B (728 aa).

The disordered stretch occupies residues 1–114; that stretch reads MKRGSKRESG…ENDSSDEEDI (114 aa). Residues 50 to 67 show a composition bias toward acidic residues; the sequence is SGTDSSDDEEDHSSEEVQ. WD repeat units lie at residues 393 to 432, 434 to 474, 514 to 556, 559 to 597, 600 to 639, 643 to 682, and 698 to 728; these read GHKDLVRCISVSPSGQWLVSGSDDCSVRFWEVSTGRCMKS, VLEG…RLLC, KHQK…SQNP, KNKGQVQKVLFHPTRPFFFVATQRYVRVYNLLKQELTKK, TNCKWVSSIAVHPAGDNLICGSYDSKLAWFDMDLSTKPYK, HHKKALRAVSFHKSYPLFASGSDDASVIVCHGMVYNDLLQ, and HRDLGVLDVMFHPTQPWVFSSGADGTIRLFT.

Belongs to the WD repeat BOP1/ERB1 family. In terms of assembly, component of the PeBoW complex, composed of bop1, pes1 and wdr12. The complex is held together by bop1, which interacts with pes1 via its N-terminal domain and with wdr12 via a high-affinity interaction between the seven-bladed beta-propeller domains of the 2 proteins. The PeBoW complex associates with the 66S pre-ribosome.

Its subcellular location is the nucleus. It is found in the nucleolus. The protein resides in the nucleoplasm. Component of the PeBoW complex, which is required for maturation of 28S and 5.8S ribosomal RNAs and formation of the 60S ribosome. The polypeptide is Ribosome biogenesis protein bop1-B (bop1-b) (Xenopus laevis (African clawed frog)).